Here is a 145-residue protein sequence, read N- to C-terminus: Oleosin L (145 aa).

N-acetylalanine is present on Ala-2. 2 consecutive transmembrane segments (helical) span residues 36 to 56 (GSLL…LTIA) and 59 to 79 (LLVI…LLGA). The Proline-knot signature appears at 58 to 69 (PLLVIFSPVLVP). Residues 123 to 132 (KAREMKDRAE) are compositionally biased toward basic and acidic residues. The tract at residues 123 to 145 (KAREMKDRAEQFSQQPVAGSQTS) is disordered. Residues 133–145 (QFSQQPVAGSQTS) show a composition bias toward polar residues.

Belongs to the oleosin family. As to expression, expressed in seeds (at protein level).

The protein localises to the lipid droplet. Its subcellular location is the membrane. Functionally, may have a structural role to stabilize the lipid body during desiccation of the seed by preventing coalescence of the oil. Probably interacts with both lipid and phospholipid moieties of lipid bodies. May also provide recognition signals for specific lipase anchorage in lipolysis during seedling growth. The sequence is that of Oleosin L from Sesamum indicum (Oriental sesame).